A 163-amino-acid chain; its full sequence is Ribonuclease P protein subunit p25-like protein (163 aa).

Disordered regions lie at residues 1-22 (MEHY…PQLP) and 129-163 (NEYG…DTRF). A compositionally biased stretch (basic residues) spans 154-163 (PRRRARDTRF).

Belongs to the histone-like Alba family.

It is found in the nucleus. May be a component of ribonuclease P or MRP. The polypeptide is Ribonuclease P protein subunit p25-like protein (RPP25L) (Bos taurus (Bovine)).